The primary structure comprises 378 residues: Glycerate kinase (378 aa).

This sequence belongs to the glycerate kinase type-1 family.

The enzyme catalyses (R)-glycerate + ATP = (2R)-3-phosphoglycerate + ADP + H(+). This chain is Glycerate kinase (glxK), found in Haemophilus influenzae (strain ATCC 51907 / DSM 11121 / KW20 / Rd).